Reading from the N-terminus, the 391-residue chain is Thioredoxin-interacting protein (391 aa).

A Glycyl lysine isopeptide (Lys-Gly) (interchain with G-Cter in ubiquitin) cross-link involves residue lysine 212. At serine 361 the chain carries Phosphoserine.

This sequence belongs to the arrestin family. In terms of assembly, homodimer; disulfide-linked. Interacts with TXN/thioredoxin through its redox-active site. Interacts with transcriptional repressors ZBTB16, ZBTB32 and HDAC1. Interacts with DDIT4. Ubiquitinated; undergoes heterotypic 'Lys-48'-/'Lys-63'-branched polyubiquitination catalyzed by ITCH and UBR5 resulting in proteasomal degradation. Deubiquitinated by USP5, leading to TXNIP stabilization.

It is found in the cytoplasm. May act as an oxidative stress mediator by inhibiting thioredoxin activity or by limiting its bioavailability. Interacts with COPS5 and restores COPS5-induced suppression of CDKN1B stability, blocking the COPS5-mediated translocation of CDKN1B from the nucleus to the cytoplasm. Functions as a transcriptional repressor, possibly by acting as a bridge molecule between transcription factors and corepressor complexes, and over-expression will induce G0/G1 cell cycle arrest. Required for the maturation of natural killer cells. Acts as a suppressor of tumor cell growth. Inhibits the proteasomal degradation of DDIT4, and thereby contributes to the inhibition of the mammalian target of rapamycin complex 1 (mTORC1). The chain is Thioredoxin-interacting protein (TXNIP) from Pongo abelii (Sumatran orangutan).